The following is a 271-amino-acid chain: Troponin T, fast skeletal muscle (271 aa).

Residues 1 to 21 (MSDEEVEHVEEEYEEEEEAQE) show a composition bias toward acidic residues. The segment at 1–74 (MSDEEVEHVE…EKVDFDDIQK (74 aa)) is disordered. Residue Ser2 is modified to N-acetylserine. At Ser2 the chain carries Phosphoserine. Composition is skewed to basic and acidic residues over residues 31-53 (PEVHEEVHEVHEPEEVQEEEKPR) and 62-74 (PEGEKVDFDDIQK). A Phosphoserine modification is found at Ser90. Positions 113–155 (RAERAEQQRIRAEKERERQNRLAEEKARREEEDAKRRAEDDLK) are enriched in basic and acidic residues. The disordered stretch occupies residues 113–194 (RAERAEQQRI…REMKKKVLAE (82 aa)). Phosphoserine is present on residues Ser161, Ser168, and Ser169. Over residues 183 to 194 (TAREMKKKVLAE) the composition is skewed to basic and acidic residues. Ser205 carries the post-translational modification Phosphoserine. At Tyr221 the chain carries Phosphotyrosine. The tract at residues 248–271 (IDQAQKHSKKAGTAPKGKVGGRWK) is disordered.

This sequence belongs to the troponin T family.

Troponin T is the tropomyosin-binding subunit of troponin, the thin filament regulatory complex which confers calcium-sensitivity to striated muscle actomyosin ATPase activity. In Bos taurus (Bovine), this protein is Troponin T, fast skeletal muscle (Tnnt3).